The sequence spans 360 residues: Archaemetzincin-2 (360 aa).

His254 contacts Zn(2+). Catalysis depends on Glu255, which acts as the Proton acceptor. 6 residues coordinate Zn(2+): His258, His264, Cys265, Cys270, Cys289, and Cys292.

It belongs to the peptidase M54 family. The cofactor is Zn(2+). In terms of tissue distribution, down-regulated in testis from patients with maturation arrest (MA) or Sertoli cell-only syndrome (SCOS).

Probable zinc metalloprotease. The chain is Archaemetzincin-2 (AMZ2) from Homo sapiens (Human).